A 264-amino-acid chain; its full sequence is 3-methyl-2-oxobutanoate hydroxymethyltransferase (264 aa).

D45 and D84 together coordinate Mg(2+). Residues 45–46, D84, and K112 each bind 3-methyl-2-oxobutanoate; that span reads DS. E114 is a binding site for Mg(2+). E181 acts as the Proton acceptor in catalysis.

Belongs to the PanB family. As to quaternary structure, homodecamer; pentamer of dimers. Requires Mg(2+) as cofactor.

It is found in the cytoplasm. It catalyses the reaction 3-methyl-2-oxobutanoate + (6R)-5,10-methylene-5,6,7,8-tetrahydrofolate + H2O = 2-dehydropantoate + (6S)-5,6,7,8-tetrahydrofolate. Its pathway is cofactor biosynthesis; (R)-pantothenate biosynthesis; (R)-pantoate from 3-methyl-2-oxobutanoate: step 1/2. In terms of biological role, catalyzes the reversible reaction in which hydroxymethyl group from 5,10-methylenetetrahydrofolate is transferred onto alpha-ketoisovalerate to form ketopantoate. The sequence is that of 3-methyl-2-oxobutanoate hydroxymethyltransferase from Escherichia coli O1:K1 / APEC.